The primary structure comprises 132 residues: Extracellular small neutral protease (132 aa).

Ca(2+)-binding residues include D76 and T78. Position 83 (H83) interacts with Zn(2+). E84 is a catalytic residue. 2 residues coordinate Zn(2+): H87 and D93. Cysteines 99 and 112 form a disulfide.

Belongs to the peptidase M7 family. It depends on Ca(2+) as a cofactor. The cofactor is Zn(2+).

The protein resides in the secreted. The enzyme catalyses Hydrolyzes proteins with a preference for Tyr or Phe in the P1' position. Has no action on amino-acid p-nitroanilides.. Specifically hydrolyzes the peptide bond at the imino side of aromatic residues. This Streptomyces caespitosus protein is Extracellular small neutral protease (snpA).